The sequence spans 489 residues: Cobyric acid synthase (489 aa).

Positions 254-442 constitute a GATase cobBQ-type domain; sequence ARVIAVPVLP…VHGLFADDRQ (189 aa). Residue Cys-336 is the Nucleophile of the active site. The active site involves His-434.

It belongs to the CobB/CobQ family. CobQ subfamily.

Its pathway is cofactor biosynthesis; adenosylcobalamin biosynthesis. Catalyzes amidations at positions B, D, E, and G on adenosylcobyrinic A,C-diamide. NH(2) groups are provided by glutamine, and one molecule of ATP is hydrogenolyzed for each amidation. This is Cobyric acid synthase from Methylobacterium nodulans (strain LMG 21967 / CNCM I-2342 / ORS 2060).